The primary structure comprises 831 residues: Maltodextrin phosphorylase (831 aa).

At Lys592 the chain carries N6-(pyridoxal phosphate)lysine.

It belongs to the glycogen phosphorylase family. As to quaternary structure, trimer (at 25 degrees Celsius). The cofactor is pyridoxal 5'-phosphate.

The enzyme catalyses [(1-&gt;4)-alpha-D-glucosyl](n) + phosphate = [(1-&gt;4)-alpha-D-glucosyl](n-1) + alpha-D-glucose 1-phosphate. In terms of biological role, phosphorylase is an important allosteric enzyme in carbohydrate metabolism. Catalyzes the phospholytic cleavage of maltodextrins with a minimal chain length of five glucose residues to yield glucose-1-phosphate. Low activity with tetraose and no activity with triose and maltose. Long maltodextrins (8 to 15 glucose units), amylose and starch are not as good substrates as maltoheptaose. This chain is Maltodextrin phosphorylase (malP), found in Thermococcus litoralis (strain ATCC 51850 / DSM 5473 / JCM 8560 / NS-C).